A 403-amino-acid polypeptide reads, in one-letter code: ATP phosphoribosyltransferase regulatory subunit (403 aa).

Belongs to the class-II aminoacyl-tRNA synthetase family. HisZ subfamily. Heteromultimer composed of HisG and HisZ subunits.

It localises to the cytoplasm. It participates in amino-acid biosynthesis; L-histidine biosynthesis; L-histidine from 5-phospho-alpha-D-ribose 1-diphosphate: step 1/9. Required for the first step of histidine biosynthesis. May allow the feedback regulation of ATP phosphoribosyltransferase activity by histidine. This is ATP phosphoribosyltransferase regulatory subunit from Nostoc punctiforme (strain ATCC 29133 / PCC 73102).